The primary structure comprises 267 residues: Probable 3-methyl-2-oxobutanoate hydroxymethyltransferase (267 aa).

This sequence belongs to the PanB family.

The catalysed reaction is 3-methyl-2-oxobutanoate + (6R)-5,10-methylene-5,6,7,8-tetrahydrofolate + H2O = 2-dehydropantoate + (6S)-5,6,7,8-tetrahydrofolate. It functions in the pathway cofactor biosynthesis; (R)-pantothenate biosynthesis; (R)-pantoate from 3-methyl-2-oxobutanoate: step 1/2. The polypeptide is Probable 3-methyl-2-oxobutanoate hydroxymethyltransferase (Schizosaccharomyces pombe (strain 972 / ATCC 24843) (Fission yeast)).